A 173-amino-acid chain; its full sequence is Sialic acid TRAP transporter small permease protein SiaQ (173 aa).

The next 4 helical transmembrane spans lie at Ile13 to Ile33, Ser46 to Ile66, Leu87 to Leu107, and Leu123 to Phe143.

The protein belongs to the TRAP transporter small permease family. As to quaternary structure, the complex comprises the extracytoplasmic solute receptor protein SiaP, and the two transmembrane proteins SiaQ and SiaM. SiaQ and SiaM form a tight 1:1 complex.

The protein localises to the cell inner membrane. Part of the tripartite ATP-independent periplasmic (TRAP) transport system SiaPQM that catalyzes unidirectional Na(+)-dependent sialic acid uptake. The polypeptide is Sialic acid TRAP transporter small permease protein SiaQ (Vibrio cholerae serotype O1 (strain ATCC 39315 / El Tor Inaba N16961)).